The sequence spans 60 residues: UPF0434 protein ESA_02427 (60 aa).

It belongs to the UPF0434 family.

The sequence is that of UPF0434 protein ESA_02427 from Cronobacter sakazakii (strain ATCC BAA-894) (Enterobacter sakazakii).